The chain runs to 270 residues: DNA repair protein RecO (270 aa).

A disordered region spans residues 202–221 (PELPPSTIDADTDNPSQPPS).

It belongs to the RecO family.

Its function is as follows. Involved in DNA repair and RecF pathway recombination. In Rhodopirellula baltica (strain DSM 10527 / NCIMB 13988 / SH1), this protein is DNA repair protein RecO.